Consider the following 694-residue polypeptide: Elongation factor G (694 aa).

The 280-residue stretch at 8–287 (EDYRNFGIMA…AVVEFLPAPT (280 aa)) folds into the tr-type G domain. Residues 17-24 (AHIDAGKT), 86-90 (DTPGH), and 140-143 (NKMD) each bind GTP.

The protein belongs to the TRAFAC class translation factor GTPase superfamily. Classic translation factor GTPase family. EF-G/EF-2 subfamily.

It is found in the cytoplasm. In terms of biological role, catalyzes the GTP-dependent ribosomal translocation step during translation elongation. During this step, the ribosome changes from the pre-translocational (PRE) to the post-translocational (POST) state as the newly formed A-site-bound peptidyl-tRNA and P-site-bound deacylated tRNA move to the P and E sites, respectively. Catalyzes the coordinated movement of the two tRNA molecules, the mRNA and conformational changes in the ribosome. This is Elongation factor G from Brucella canis (strain ATCC 23365 / NCTC 10854 / RM-666).